Here is a 208-residue protein sequence, read N- to C-terminus: Imidazole glycerol phosphate synthase subunit HisH (208 aa).

One can recognise a Glutamine amidotransferase type-1 domain in the interval 1 to 206 (MIVIVDYDTG…KEMTEDEALS (206 aa)). C79 (nucleophile) is an active-site residue. Residues H181 and E183 contribute to the active site.

In terms of assembly, heterodimer of HisH and HisF.

The protein resides in the cytoplasm. It catalyses the reaction 5-[(5-phospho-1-deoxy-D-ribulos-1-ylimino)methylamino]-1-(5-phospho-beta-D-ribosyl)imidazole-4-carboxamide + L-glutamine = D-erythro-1-(imidazol-4-yl)glycerol 3-phosphate + 5-amino-1-(5-phospho-beta-D-ribosyl)imidazole-4-carboxamide + L-glutamate + H(+). The enzyme catalyses L-glutamine + H2O = L-glutamate + NH4(+). Its pathway is amino-acid biosynthesis; L-histidine biosynthesis; L-histidine from 5-phospho-alpha-D-ribose 1-diphosphate: step 5/9. IGPS catalyzes the conversion of PRFAR and glutamine to IGP, AICAR and glutamate. The HisH subunit catalyzes the hydrolysis of glutamine to glutamate and ammonia as part of the synthesis of IGP and AICAR. The resulting ammonia molecule is channeled to the active site of HisF. This Lacticaseibacillus casei (strain BL23) (Lactobacillus casei) protein is Imidazole glycerol phosphate synthase subunit HisH.